A 349-amino-acid chain; its full sequence is Protein AMBP (349 aa).

An N-terminal signal peptide occupies residues 1–19 (MQGLGALFLLLTACLTLKA). 3-hydroxy-L-kynurenine contacts are provided by Cys-52 and Lys-110. Cys-90 and Cys-187 are joined by a disulfide. An N-linked (GlcNAc...) asparagine glycan is attached at Asn-114. The 3-hydroxy-L-kynurenine site is built by Lys-136 and Lys-148. Ser-214 carries O-linked (Xyl...) (chondroitin sulfate) serine glycosylation. Disulfide bonds link Cys-230–Cys-280, Cys-239–Cys-263, Cys-255–Cys-276, Cys-286–Cys-336, Cys-295–Cys-319, and Cys-311–Cys-332. BPTI/Kunitz inhibitor domains are found at residues 230–280 (CQLN…LQTC) and 286–336 (CNLP…KEYC). Asn-233 is a glycosylation site (N-linked (GlcNAc...) asparagine).

It in the N-terminal section; belongs to the calycin superfamily. Lipocalin family. As to quaternary structure, monomer. Homodimer. In plasma, it occurs as a monomer or dimer and in covalently-linked complexes with immunoglobulin A (IgA), ALB/albumin and F2/prothrombin. Chromophore-bound alpha-1-microglobulin interacts with the constant region of immunoglobulin A. Chromophore-bound alpha-1-microglobulin interacts with ALB with molar ratio 2:1 and 1:1; this interaction does not prevent fatty acid binding to ALB. Interacts with F2/prothrombin (via N-terminus) with molar ratio 2:1 and 1:1; this interaction does not prevent the activation of prothrombin to thrombin. Interacts with NDUFAB1, a subunit of mitochondrial complex I. Interacts with FN1. In terms of assembly, I-alpha-I plasma protease inhibitors are assembled from one or two heavy chains (HC) and one light chain, bikunin. Inter-alpha-inhibitor (I-alpha-I) is composed of ITIH1/HC1, ITIH2/HC2 and bikunin, and pre-alpha-inhibitor (P-alpha-I) of ITIH3/HC3 and bikunin. Interacts with TNFAIP6 (via Link domain). Monomer. Also occurs as a complex with tryptase in mast cells. The precursor is proteolytically processed into separately functioning proteins. Post-translationally, 3-hydroxykynurenine, an oxidized tryptophan metabolite that is common in biological fluids, reacts with Cys-53, Lys-111, Lys-137, and Lys-149 to form heterogeneous polycyclic chromophores including hydroxanthommatin. The reaction by alpha-1-microglobulin is autocatalytic; the human protein forms chromophore even when expressed in insect and bacterial cells. The chromophore can react with accessible cysteines forming non-reducible thioether cross-links with other molecules of alpha-1-microglobulin or with other proteins such as Ig alpha-1 chain C region 'Cys-352'. In terms of processing, heavy chains are interlinked with bikunin via a chondroitin 4-sulfate bridge to the C-terminal aspartate. Proteolytically cleaved by PRSS3 at Kunitz domain 2. In terms of tissue distribution, expressed by the liver and secreted in plasma.

The protein localises to the secreted. Its subcellular location is the endoplasmic reticulum. The protein resides in the cytoplasm. It localises to the cytosol. It is found in the cell membrane. The protein localises to the nucleus membrane. Its subcellular location is the mitochondrion inner membrane. The protein resides in the extracellular space. It localises to the extracellular matrix. Functionally, antioxidant and tissue repair protein with reductase, heme-binding and radical-scavenging activities. Removes and protects against harmful oxidants and repairs macromolecules in intravascular and extravascular spaces and in intracellular compartments. Intravascularly, plays a regulatory role in red cell homeostasis by preventing heme- and reactive oxygen species-induced cell damage. Binds and degrades free heme to protect fetal and adult red blood cells from hemolysis. Reduces extracellular methemoglobin, a Fe3+ (ferric) form of hemoglobin that cannot bind oxygen, back to the Fe2+ (ferrous) form deoxyhemoglobin, which has oxygen-carrying potential. Upon acute inflammation, inhibits oxidation of low-density lipoprotein particles by MPO and limits vascular damage. Extravascularly, protects from oxidation products formed on extracellular matrix structures and cell membranes. Catalyzes the reduction of carbonyl groups on oxidized collagen fibers and preserves cellular and extracellular matrix ultrastructures. Importantly, counteracts the oxidative damage at blood-placenta interface, preventing leakage of free fetal hemoglobin into the maternal circulation. Intracellularly, has a role in maintaining mitochondrial redox homeostasis. Bound to complex I of the respiratory chain of mitochondria, may scavenge free radicals and preserve mitochondrial ATP synthesis. Protects renal tubule epithelial cells from heme-induced oxidative damage to mitochondria. Reduces cytochrome c from Fe3+ (ferric) to the Fe2+ (ferrous) state through formation of superoxide anion radicals in the presence of ascorbate or NADH/NADPH electron donor cofactors, ascorbate being the preferred cofactor. Has a chaperone role in facilitating the correct folding of bikunin in the endoplasmic reticulum compartment. In terms of biological role, kunitz-type serine protease inhibitor and structural component of extracellular matrix with a role in extracellular space remodeling and cell adhesion. Among others, has antiprotease activity toward kallikrein, a protease involved in airway inflammation; inhibits GZMK/granzyme, a granule-stored serine protease involved in NK and T cell cytotoxic responses; and inhibits PLG/plasmin, a protease required for activation of matrix metalloproteinases. As part of I-alpha-I complex, provides for the heavy chains to be transferred from I-alpha-I complex to hyaluronan in the presence of TNFAIP6, in a dynamic process that releases free bikunin and remodels extracellular matrix proteoglycan structures. Free bikunin, but not its heavy chain-bound form, acts as a potent protease inhibitor in airway secretions. Part of hyaluronan-rich extracellular matrix that surrounds oocyte during cumulus oophorus expansion, an indispensable process for proper ovulation. Also inhibits calcium oxalate crystallization. Its function is as follows. Kunitz-type serine protease inhibitor. Has high catalytic efficiency for F10/blood coagulation factor Xa and may act as an anticoagulant by inhibiting prothrombin activation. Inhibits trypsin and mast cell CMA1/chymase and tryptase proteases. The sequence is that of Protein AMBP (Ambp) from Rattus norvegicus (Rat).